We begin with the raw amino-acid sequence, 220 residues long: Adenylate kinase (220 aa).

Position 13-18 (13-18 (GAGKGT)) interacts with ATP. An NMP region spans residues 33–62 (STGDILRAAVKEGTPLGLEAQSYMNRGALV). AMP is bound by residues Thr-34, Arg-39, 60–62 (ALV), 88–91 (GFPR), and Gln-95. An LID region spans residues 129 to 170 (GRRTCPLCKRIFHVRFNPPPAAPPFCTDHTDCPSELVQRPDD). Arg-130 contributes to the ATP binding site. Zn(2+) is bound by residues Cys-133 and Cys-136. 139–140 (IF) contacts ATP. Positions 156 and 160 each coordinate Zn(2+). 2 residues coordinate AMP: Arg-167 and Arg-178. Arg-206 serves as a coordination point for ATP.

It belongs to the adenylate kinase family. Monomer.

The protein localises to the cytoplasm. The catalysed reaction is AMP + ATP = 2 ADP. The protein operates within purine metabolism; AMP biosynthesis via salvage pathway; AMP from ADP: step 1/1. In terms of biological role, catalyzes the reversible transfer of the terminal phosphate group between ATP and AMP. Plays an important role in cellular energy homeostasis and in adenine nucleotide metabolism. This chain is Adenylate kinase, found in Gloeobacter violaceus (strain ATCC 29082 / PCC 7421).